A 458-amino-acid polypeptide reads, in one-letter code: (R)-6-hydroxynicotine oxidase (458 aa).

In terms of domain architecture, FAD-binding PCMH-type spans 33 to 204; the sequence is RHLQRPSLIA…TEVEVQLYEL (172 aa). FAD-binding positions include 67–73, 129–130, 134–137, G144, T195, N413, and N450; these read RSGGHNP, HP, and FCGL. H71 is subject to Pros-8alpha-FAD histidine.

Belongs to the oxygen-dependent FAD-linked oxidoreductase family. In terms of assembly, monomer. FAD is required as a cofactor.

The protein localises to the cytoplasm. The catalysed reaction is (R)-6-hydroxynicotine + O2 + H2O = 6-hydroxypseudooxynicotine + H2O2. The enzyme catalyses (R)-6-hydroxynicotine + O2 = 6-hydroxy-N-methylmyosmine + H2O2. It functions in the pathway alkaloid degradation; nicotine degradation; 6-hydroxypseudooxynicotine from nicotine (R-isomer route): step 2/2. With respect to regulation, inhibited by (S)-6-hydroxynicotine. Inhibited by high concentrations of phenanthroline. In terms of biological role, involved in the degradation of D-nicotine. Catalyzes the oxidation of (R)-6-hydroxynicotine (6-hydroxy-D-nicotine) to 6-hydroxypseudooxynicotine. Oxidation of the pyrrolidine ring of (R)-6-hydroxynicotine leads to the formation of the optically inactive 6-hydroxy-N-methylmyosmine, which hydrolyzes spontaneously to 6-hydroxypseudooxynicotine. Acts with absolute stereospecificity on the D-form of 6-hydroxynicotine. Shows lower activity with (R)-6-hydroxynornicotine, and weak activity with (R)-4-(1-methylpyrrolidine-2-yl)phenol, (R)-6-chloronicotine and (R)-nicotine. This is (R)-6-hydroxynicotine oxidase from Paenarthrobacter nicotinovorans (Arthrobacter nicotinovorans).